A 253-amino-acid polypeptide reads, in one-letter code: Chitooligosaccharide deacetylase (253 aa).

Positions 61 and 125 each coordinate Mg(2+).

It belongs to the YdjC deacetylase family. ChbG subfamily. As to quaternary structure, homodimer. Mg(2+) is required as a cofactor.

It is found in the cytoplasm. It carries out the reaction N,N'-diacetylchitobiose + H2O = N-acetyl-beta-D-glucosaminyl-(1-&gt;4)-D-glucosamine + acetate. The catalysed reaction is diacetylchitobiose-6'-phosphate + H2O = N'-monoacetylchitobiose-6'-phosphate + acetate. It functions in the pathway glycan degradation; chitin degradation. Functionally, involved in the degradation of chitin. ChbG is essential for growth on the acetylated chitooligosaccharides chitobiose and chitotriose but is dispensable for growth on cellobiose and chitosan dimer, the deacetylated form of chitobiose. Deacetylation of chitobiose-6-P and chitotriose-6-P is necessary for both the activation of the chb promoter by the regulatory protein ChbR and the hydrolysis of phosphorylated beta-glucosides by the phospho-beta-glucosidase ChbF. Catalyzes the removal of only one acetyl group from chitobiose-6-P to yield monoacetylchitobiose-6-P, the inducer of ChbR and the substrate of ChbF. In Proteus mirabilis (strain HI4320), this protein is Chitooligosaccharide deacetylase.